Here is a 164-residue protein sequence, read N- to C-terminus: UPF0303 protein RHECIAT_CH0003058 (164 aa).

This sequence belongs to the UPF0303 family.

This is UPF0303 protein RHECIAT_CH0003058 from Rhizobium etli (strain CIAT 652).